We begin with the raw amino-acid sequence, 38 residues long: uncharacterized protein (38 aa).

This is an uncharacterized protein from Acidianus two-tailed virus (ATV).